Here is a 725-residue protein sequence, read N- to C-terminus: MVLTILFSAYKLCRFFAMSSPRPGAERLAVPGPDGGGGAGPWWTAGGRGPREVSPGVGAEVQGALERALPELQQALSALKQAGGGRAVGAGLAEVFQLVEEAWLLPAMGREVAQGLCDAIRLEGGLDLLLRLLQAPELETRVQAARLLEQILVAENRRDRVARIGLGVILNLAKEREPVELARSVAGILEHMFKHSEETCQRLVAAGGLDAVLYWCRRTDPALLRHCALALANCAMHGGQAAQRRMVEKRAAEWLFPLAFSKEDELLRLHACLAVAVLATNKEVEREVERSGTLALVEPLVASLDPGRFARCLVDASDTSQGRGPDDLQRLVPLLDSSRMEAQCIGAFYLCAEAVIMHIKNRNKVFSDIGAIQSLKRLVSYSTNGTTSALAKRALRLLGEEVPRPILPCVASWKEAEVQTWLQQIGFSQYCESFREQQVDGDLLLRLTEEELQTDLGMKSGITRKRFFRELTELKTFANYATCDRSNLADWLGSLDPRFRQYTYGLVSCGLDRSLLHRVSEQQLLEDCGIRLGVHRVRILTAAREMLHSPLPCTGSKPSGDVPDVFISYRRNSGSQLASLLKVHLQLHGFSVFIDVEKLEAGKFEDKLIQSIMSARNFVLVLSAGALDKCMQDHDCKDWVHKEIVTALSCGKNIVPVIDGFEWPEPHTLPEDMQAVLTFNGIKWSHEYQEATIEKIIRFLQGRSSRDSSAGSDTSLEGAAPMGPT.

A mitochondrion-targeting transit peptide spans 1–27 (MVLTILFSAYKLCRFFAMSSPRPGAER). The stretch at 60 to 100 (EVQGALERALPELQQALSALKQAGGGRAVGAGLAEVFQLVE) is one ARM 1 repeat. NAD(+) contacts are provided by residues Trp103, Arg110, 149-158 (EQILVAENRR), and 191-194 (HMFK). ARM repeat units lie at residues 114 to 153 (QGLCDAIRLEGGLDLLLRLLQAPELETRVQAARLLEQILV), 155 to 194 (ENRRDRVARIGLGVILNLAKEREPVELARSVAGILEHMFK), 197 to 236 (EETCQRLVAAGGLDAVLYWCRRTDPALLRHCALALANCAM), 238 to 281 (GGQA…LATN), 282 to 315 (KEVEREVERSGTLALVEPLVASLDPGRFARCLVD), 316 to 355 (ASDTSQGRGPDDLQRLVPLLDSSRMEAQCIGAFYLCAEAV), and 360 to 403 (KNRN…EEVP). SAM domains are found at residues 413 to 477 (WKEA…LKTF) and 483 to 549 (CDRS…MLHS). Residues Ser549 and Ser559 each carry the phosphoserine modification. The region spanning 561–704 (DVPDVFISYR…KIIRFLQGRS (144 aa)) is the TIR domain. Residues 570–571 (RR) and Glu600 each bind NAD(+). Glu643 is a catalytic residue. The interval 705 to 725 (SRDSSAGSDTSLEGAAPMGPT) is disordered.

It belongs to the SARM1 family. Homooctamer; forms an octameric ring via SAM domains. Interacts with TICAM1/TRIF and thereby interferes with TICAM1/TRIF function. Interacts with MAPK10/JNK3 and SDC2 (via cytoplasmic domain). Phosphorylation at Ser-549 by JNK kinases (MAPK8, MAPK9 and /or MAPK10) enhance the NAD(+) hydrolase (NADase) activity. Phosphorylation at Ser-549 and subsequent activation takes place in response to oxidative stress conditions and inhibits mitochondrial respiration. In terms of tissue distribution, highest expression seen in the spleen and the brain, followed by lung, kidney, liver and other tissues.

The protein resides in the cytoplasm. It is found in the cell projection. Its subcellular location is the axon. It localises to the dendrite. The protein localises to the synapse. The protein resides in the mitochondrion. The enzyme catalyses NAD(+) + H2O = ADP-D-ribose + nicotinamide + H(+). It catalyses the reaction NAD(+) = cyclic ADP-beta-D-ribose + nicotinamide + H(+). The catalysed reaction is NADP(+) + H2O = ADP-D-ribose 2'-phosphate + nicotinamide + H(+). With respect to regulation, autoinhibited: in the inactive state, the enzymatic TIR domain is held apart by the autoinhibiting ARM repeats. NAD(+)-binding to ARM repeats maintains an inactive state by promoting interaction between ARM repeats and the TIR domain, thereby facilitating inhibition of the enzymatic TIR domain. Following activation, possibly by nicotinamide mononucleotide (NMN), auto-inhibitory interactions are released, allowing self-association of the TIR domains and subsequent activation of the NAD(+) hydrolase (NADase) activity. Self-association of TIR domains is facilitated by the octamer of SAM domains. Functionally, NAD(+) hydrolase, which plays a key role in axonal degeneration following injury by regulating NAD(+) metabolism. Acts as a negative regulator of MYD88- and TRIF-dependent toll-like receptor signaling pathway by promoting Wallerian degeneration, an injury-induced form of programmed subcellular death which involves degeneration of an axon distal to the injury site. Wallerian degeneration is triggered by NAD(+) depletion: in response to injury, SARM1 is activated and catalyzes cleavage of NAD(+) into ADP-D-ribose (ADPR), cyclic ADPR (cADPR) and nicotinamide; NAD(+) cleavage promoting cytoskeletal degradation and axon destruction. Also able to hydrolyze NADP(+), but not other NAD(+)-related molecules. Can activate neuronal cell death in response to stress. Regulates dendritic arborization through the MAPK4-JNK pathway. Involved in innate immune response: inhibits both TICAM1/TRIF- and MYD88-dependent activation of JUN/AP-1, TRIF-dependent activation of NF-kappa-B and IRF3, and the phosphorylation of MAPK14/p38. This Sus scrofa (Pig) protein is NAD(+) hydrolase SARM1.